Reading from the N-terminus, the 341-residue chain is S-adenosylmethionine:tRNA ribosyltransferase-isomerase (341 aa).

It belongs to the QueA family. Monomer.

Its subcellular location is the cytoplasm. It catalyses the reaction 7-aminomethyl-7-carbaguanosine(34) in tRNA + S-adenosyl-L-methionine = epoxyqueuosine(34) in tRNA + adenine + L-methionine + 2 H(+). It participates in tRNA modification; tRNA-queuosine biosynthesis. Its function is as follows. Transfers and isomerizes the ribose moiety from AdoMet to the 7-aminomethyl group of 7-deazaguanine (preQ1-tRNA) to give epoxyqueuosine (oQ-tRNA). The sequence is that of S-adenosylmethionine:tRNA ribosyltransferase-isomerase from Clostridium perfringens (strain SM101 / Type A).